The sequence spans 3019 residues: Genome polyprotein (3019 aa).

N-acetylserine; by host is present on serine 2. Residues 2–23 (STLPKPQRKTKRNTNRRPMDVK) form an interaction with STAT1 region. The interaction with EIF2AK2/PKR stretch occupies residues 2–58 (STLPKPQRKTKRNTNRRPMDVKFPGGGQIVGGVYLLPRRGPRLGVRATRKTSERSQP). The interval 2–59 (STLPKPQRKTKRNTNRRPMDVKFPGGGQIVGGVYLLPRRGPRLGVRATRKTSERSQPR) is interaction with DDX3X. Residues 2–75 (STLPKPQRKT…PKARQPQGRH (74 aa)) form a disordered region. Over 2–168 (STLPKPQRKT…EDGINYATGN (167 aa)) the chain is Cytoplasmic. 2 consecutive short sequence motifs (nuclear localization signal) follow at residues 5–13 (PKPQRKTKR) and 38–43 (PRRGPR). Positions 7 to 16 (PQRKTKRNTN) are enriched in basic residues. Positions 32 to 47 (GGVYLLPRRGPRLGVR) are enriched in low complexity. Position 53 is a phosphoserine; by host (serine 53). 2 consecutive short sequence motifs (nuclear localization signal) follow at residues 58–64 (PRGRRQP) and 66–71 (PKARQP). Serine 99 is modified (phosphoserine; by host). The tract at residues 112–152 (PRRRSRNLGKVIDTLTCGFADLMGYIPVVGAPLGGVAAALA) is important for endoplasmic reticulum and mitochondrial localization. Position 116 is a phosphoserine; by host PKA (serine 116). The segment at 122–173 (VIDTLTCGFADLMGYIPVVGAPLGGVAAALAHGVRAIEDGINYATGNLPGCS) is interaction with APOA2. The important for lipid droplets localization stretch occupies residues 164–167 (YATG). Residues 169–189 (LPGCSFSIFLLALLSCLTTPA) traverse the membrane as a helical segment. A propeptide spans 178 to 191 (LLALLSCLTTPASA) (ER anchor for the core protein, removed in mature form by host signal peptidase). Residues 190–358 (SALTYGNSSG…FGGHWGILLA (169 aa)) lie on the Lumenal side of the membrane. 4 N-linked (GlcNAc...) asparagine; by host glycosylation sites follow: asparagine 196, asparagine 209, asparagine 234, and asparagine 250. An important for fusion region spans residues 265–296 (LAGAAVVCSSLYIGDLCGSLFLAGQLFTFQPR). A glycan (N-linked (GlcNAc...) asparagine; by host) is linked at asparagine 305. Residues 359 to 379 (VAYFGMAGNWLKVLAVLFLFA) form a helical membrane-spanning segment. At 380 to 730 (GVEATTTVGH…WEYIVLMFLV (351 aa)) the chain is on the lumenal side. The HVR1 stretch occupies residues 385-411 (TTVGHGVARTTAGITGLFSPGASQNLQ). Asparagine 415 is a glycosylation site (N-linked (GlcNAc...) asparagine; by host). N-linked (GlcNAc...) (high mannose) asparagine; by host glycosylation is found at asparagine 422 and asparagine 429. Intrachain disulfides connect cysteine 428/cysteine 553, cysteine 451/cysteine 458, cysteine 487/cysteine 495, and cysteine 504/cysteine 509. Asparagine 447 carries an N-linked (GlcNAc...) asparagine; by host glycan. The tract at residues 474 to 479 (KVNISG) is HVR2. Residue asparagine 476 is glycosylated (N-linked (GlcNAc...) asparagine; by host). Residues 481–494 (SDDRPYCWHYAPRP) are CD81-binding 1. A glycan (N-linked (GlcNAc...) asparagine; by host) is linked at asparagine 533. Positions 545–552 (PPTGGWFG) are CD81-binding 2. Asparagine 557 is a glycosylation site (N-linked (GlcNAc...) asparagine; by host). Cysteine 565 and cysteine 570 are joined by a disulfide. Asparagine 578 carries N-linked (GlcNAc...) asparagine; by host glycosylation. 3 cysteine pairs are disulfide-bonded: cysteine 586–cysteine 590, cysteine 602–cysteine 625, and cysteine 612–cysteine 649. Asparagine 628 and asparagine 650 each carry an N-linked (GlcNAc...) (high mannose) asparagine; by host glycan. A disulfide bond links cysteine 657 and cysteine 682. The segment at 665–676 (IEMSPLLFSTTQ) is PKR/eIF2-alpha phosphorylation homology domain (PePHD). A helical membrane pass occupies residues 731–751 (LADARICTCLWLMLLISNVEA). Over 752–762 (AVERLVVLNAA) the chain is Lumenal. A helical transmembrane segment spans residues 763-783 (SAAGTAGWWWAVLFLCCVWYV). The Cytoplasmic segment spans residues 784–786 (KGR). Residues 787–808 (LVPACTYMALGMWPLLLTILAL) traverse the membrane as a helical segment. Residues 809 to 818 (PHRAYAMDNE) lie on the Lumenal side of the membrane. The chain crosses the membrane as a helical span at residues 819-839 (QAASLGAVGLLAITIFTITPT). Over 840 to 843 (YKKL) the chain is Cytoplasmic. Residues 844–863 (LTCFIWWNQYFLARAEAMVH) traverse the membrane as a helical segment. Residues 864-886 (EWVPDLRVRGGRDSIILLTCLLH) lie on the Lumenal side of the membrane. A helical membrane pass occupies residues 887 to 907 (PQLGFEVTKILLAILAPLYIL). Residues 908-1031 (QYSLLKVPYF…DMQRGGWKLL (124 aa)) form the Peptidase C18 domain. Topologically, residues 908–1662 (QYSLLKVPYF…CMSADLEVIT (755 aa)) are cytoplasmic. The tract at residues 909-1211 (YSLLKVPYFV…PVENMETTMR (303 aa)) is protease NS2-3. Cysteine 927 carries S-palmitoyl cysteine; by host lipidation. Residues 934–954 (AGGRYVQACLLRLGAWTGTFI) are interaction with host SCPS1. Residues histidine 957, glutamate 977, and cysteine 998 each act as for protease NS2 activity; shared with dimeric partner in the active site. Residues 1032–1213 (APITAYAQQT…ENMETTMRSP (182 aa)) enclose the Peptidase S29 domain. Active-site charge relay system; for serine protease NS3 activity residues include histidine 1088 and aspartate 1112. The Zn(2+) site is built by cysteine 1128 and cysteine 1130. Serine 1170 serves as the catalytic Charge relay system; for serine protease NS3 activity. 2 residues coordinate Zn(2+): cysteine 1176 and histidine 1180. The Helicase ATP-binding domain occupies 1222 to 1374 (PAVPQTYQVG…PNITETALPT (153 aa)). 1235 to 1242 (APTGSGKS) serves as a coordination point for ATP. Residues serine 1242 and glutamate 1322 each coordinate Mg(2+). The short motif at 1321–1324 (DECH) is the DECH box element. Residues 1491–1503 (QRRGRTGRGKPGV) form an RNA-binding region. Residues 1663 to 1683 (STWVLVGGVLAALAAYCLSVG) form a helical membrane-spanning segment. The tract at residues 1684–1695 (CVVICGRITLTG) is NS3-binding. Residues 1684–1810 (CVVICGRITL…SLTSPLRTSQ (127 aa)) lie on the Cytoplasmic side of the membrane. The chain crosses the membrane as a helical span at residues 1811 to 1829 (TLLLNILGGWIAAQVAPPP). The Lumenal segment spans residues 1830-1833 (ASTA). The chain crosses the membrane as a helical span at residues 1834–1854 (FVVSGLAGAAVGSIRLGRVLV). Aspartate 1855 is a topological domain (cytoplasmic). A helical transmembrane segment spans residues 1856-1876 (VLAGYGAGVSGALVAFKIMSG). The Lumenal portion of the chain corresponds to 1877 to 1886 (DCPTTEDMVN). Residues 1887-1907 (LLPALLSPGALVVGVVCAAIL) form a helical membrane-spanning segment. At 1908 to 1977 (RRHVGPAEGA…WVNEDTATPC (70 aa)) the chain is on the cytoplasmic side. The S-palmitoyl cysteine; by host moiety is linked to residue cysteine 1977. Residues 1978-2007 (ATSWLRDVWDWVCTVLSDFKVWLQAKLFPR) lie within the membrane without spanning it. Over 2008-2998 (LPGIPFLSCQ…YHSVSQARPR (991 aa)) the chain is Cytoplasmic. Residues cysteine 2016, cysteine 2034, cysteine 2036, and cysteine 2057 each coordinate Zn(2+). The tract at residues 2125–2213 (EFFTEVDGVR…ASSSASQLSA (89 aa)) is FKBP8-binding. The interval 2125–2338 (EFFTEVDGVR…PIPPPRRKRL (214 aa)) is transcriptional activation. The interaction with non-structural protein 4A stretch occupies residues 2140-2144 (PPCKP). A disordered region spans residues 2189–2223 (ETASRRLKRGSPPSLASSSASQLSAPSLKATCTTS). Residues 2194 to 2446 (RLKRGSPPSL…ALITPCAAEE (253 aa)) form an interaction with host SKP2 region. Phosphoserine; by host; in p56 is present on serine 2199. The span at 2199-2216 (SPPSLASSSASQLSAPSL) shows a compositional bias: low complexity. Phosphoserine; by host; in p58 is present on residues serine 2202, serine 2206, serine 2209, serine 2212, and serine 2215. An ISDR region spans residues 2215-2254 (SLKATCTTSKDHPDMELIEANLLWRQEMGGNITRVESENK). The interaction with EIF2AK2/PKR stretch occupies residues 2215-2280 (SLKATCTTSK…REISVSAECH (66 aa)). Residues 2254 to 2312 (KVVVLDSFEPLTAEYDEREISVSAECHRPPRHKFPPALPIWARPDYNPPLLQAWQMPGY) form an NS4B-binding region. The interval 2305–2383 (QAWQMPGYEP…SITSPDPPAP (79 aa)) is V3. The short motif at 2328–2331 (APIP) is the SH3-binding element. Residues 2333–2341 (PRRKRLVHL) carry the Nuclear localization signal motif. Residue lysine 2356 forms a Glycyl lysine isopeptide (Lys-Gly) (interchain with G-Cter in ubiquitin) linkage. The interval 2359–2418 (VEGSSDPGPSSDSGLSITSPDPPAPTTPDDACSEAESYSSMPPLEGEPGDPDLSSGSWST) is disordered. Over residues 2361–2372 (GSSDPGPSSDSG) the composition is skewed to low complexity. Residues serine 2457 and serine 2470 each carry the phosphoserine; by host modification. In terms of domain architecture, RdRp catalytic spans 2642-2760 (PMGFSYDTRC…ICESAGVQED (119 aa)). Mg(2+) is bound by residues aspartate 2648, aspartate 2746, and aspartate 2747. A helical membrane pass occupies residues 2999–3019 (LLLLGLLLLTVGVGIFLVPAR).

This sequence belongs to the hepacivirus polyprotein family. Homooligomer. Interacts with E1 (via C-terminus). Interacts with the non-structural protein 5A. Interacts (via N-terminus) with host STAT1 (via SH2 domain); this interaction results in decreased STAT1 phosphorylation and ubiquitin-mediated proteasome-dependent STAT1 degradation, leading to decreased IFN-stimulated gene transcription. Interacts with host STAT3; this interaction constitutively activates STAT3. Interacts with host LTBR receptor. Interacts with host TNFRSF1A receptor and possibly induces apoptosis. Interacts with host HNRPK. Interacts with host YWHAE. Interacts with host UBE3A/E6AP. Interacts with host DDX3X. Interacts with host APOA2. Interacts with host RXRA protein. Interacts with host SP110 isoform 3/Sp110b; this interaction sequesters the transcriptional corepressor SP110 away from the nucleus. Interacts with host CREB3 nuclear transcription protein; this interaction triggers cell transformation. Interacts with host ACY3. Interacts with host C1QR1. Interacts with host RBM24; this interaction, which enhances the interaction of the mature core protein with 5'-UTR, may inhibit viral translation and favor replication. Interacts with host EIF2AK2/PKR; this interaction induces the autophosphorylation of EIF2AK2. Part of the viral assembly initiation complex composed of NS2, E1, E2, NS3, NS4A, NS5A and the mature core protein. As to quaternary structure, forms a heterodimer with envelope glycoprotein E2. Interacts with mature core protein. Interacts with protease NS2. The heterodimer E1/E2 interacts with host CLDN1; this interaction plays a role in viral entry into host cell. Interacts with host SPSB2 (via C-terminus). Part of the viral assembly initiation complex composed of NS2, E1, E2, NS3, NS4A, NS5A and the mature core protein. Interacts with host NEURL3; this interaction prevents E1 binding to glycoprotein E2. In terms of assembly, forms a heterodimer with envelope glycoprotein E1. Interacts with host CD81 and SCARB1 receptors; these interactions play a role in viral entry into host cell. Interacts with host EIF2AK2/PKR; this interaction inhibits EIF2AK2 and probably allows the virus to evade the innate immune response. Interacts with host CD209/DC-SIGN and CLEC4M/DC-SIGNR. Interact with host SPCS1; this interaction is essential for viral particle assembly. Interacts with protease NS2. The heterodimer E1/E2 interacts with host CLDN1; this interaction plays a role in viral entry into host cell. Part of the viral assembly initiation complex composed of NS2, E1, E2, NS3, NS4A, NS5A and the mature core protein. Interacts with host SLC3A2/4F2hc; the interaction may facilitate viral entry into host cell. Interacts with human PLSCR1. Homohexamer. Homoheptamer. Interacts with protease NS2. As to quaternary structure, homodimer. Interacts with host SPCS1; this interaction is essential for viral particle assembly. Interacts with envelope glycoprotein E1. Interacts with envelope glycoprotein E2. Interacts with viroporin p7. Interacts with serine protease/helicase NS3. Part of the replication complex composed of NS2, NS3, NS4A, NS4B, NS5A and the RNA-directed RNA polymerase embedded in an ER-derived membranous web. Part of the viral assembly initiation complex composed of NS2, E1, E2, NS3, NS4A, NS5A and the mature core protein. In terms of assembly, interacts with protease NS2. Interacts with non-structural protein 4A; this interaction stabilizes the folding of NS3 serine protease. NS3-NS4A interaction is essential for NS3 activation and allows membrane anchorage of the latter. NS3/NS4A complex also prevents phosphorylation of host IRF3, thus preventing the establishment of dsRNA induced antiviral state. Interacts with host MAVS; this interaction leads to the cleavage and inhibition of host MAVS. Interacts with host TICAM1; this interaction leads to the cleavage and inhibition of host TICAM1. Interacts with host TANK-binding kinase/TBK1; this interaction results in the inhibition of the association between TBK1 and IRF3, which leads to the inhibition of IRF3 activation. Interacts with host RBM24. Part of the replication complex composed of NS2, NS3, NS4A, NS4B, NS5A and the RNA-directed RNA polymerase embedded in an ER-derived membranous web. Part of the viral assembly initiation complex composed of NS2, E1, E2, NS3, NS4A, NS5A and the mature core protein. Interacts with NS3 serine protease; this interaction stabilizes the folding of NS3 serine protease. NS3-NS4A interaction is essential for NS3 activation and allows membrane anchorage of the latter. Interacts with non-structural protein 5A (via N-terminus). Part of the replication complex composed of NS2, NS3, NS4A, NS4B, NS5A and the RNA-directed RNA polymerase embedded in an ER-derived membranous web. Part of the viral assembly initiation complex composed of NS2, E1, E2, NS3, NS4A, NS5A and the mature core protein. As to quaternary structure, homomultimer. Interacts with non-structural protein NS5A. Interacts with host PLA2G4C; this interaction likely initiates the recruitment of replication complexes to lipid droplets. Interacts with host STING; this interaction disrupts the interaction between STING and TBK1 thereby suppressing the interferon signaling. Part of the replication complex composed of NS2, NS3, NS4A, NS4B, NS5A and the RNA-directed RNA polymerase embedded in an ER-derived membranous web. In terms of assembly, monomer. Homodimer; dimerization is required for RNA-binding. Interacts with the mature core protein. Interacts (via N-terminus) with non-structural protein 4A. Interacts with non-structural protein 4B. Interacts (via region D2) with RNA-directed RNA polymerase. Part of the viral assembly initiation complex composed of NS2, E1, E2, NS3, NS4A, NS5A and the mature core protein. Part of the replication complex composed of NS2, NS3, NS4A, NS4B, NS5A and the RNA-directed RNA polymerase embedded in an ER-derived membranous web. Interacts with host GRB2. Interacts with host BIN1. Interacts with host PIK3R1. Interacts with host SRCAP. Interacts with host FKBP8. Interacts (via C-terminus) with host VAPB (via MSP domain). Interacts with host EIF2AK2/PKR; this interaction leads to disruption of EIF2AK2 dimerization by NS5A and probably allows the virus to evade the innate immune response. Interacts (via N-terminus) with host PACSIN2 (via N-terminus); this interaction attenuates protein kinase C alpha-mediated phosphorylation of PACSIN2 by disrupting the interaction between PACSIN2 and PRKCA. Interacts (via N-terminus) with host SRC kinase (via SH2 domain). Interacts with most Src-family kinases. Interacts with host IFI27 and SKP2; promotes the ubiquitin-mediated proteasomal degradation of NS5A. Interacts with host GPS2. Interacts with host TNFRSF21; this interaction allows the modulation by the virus of JNK, p38 MAPK, STAT3, and Akt signaling pathways in a DR6-dependent manner. Interacts (via N-terminus) with host CIDEB (via N-terminus); this interaction seems to regulate the association of HCV particles with APOE. Interacts with host CHKA/Choline Kinase-alpha; CHKA bridges host PI4KA and NS5A and potentiates NS5A-stimulated PI4KA activity, which then facilitates the targeting of the ternary complex to the ER for viral replication. Interacts with host SPSB2 (via C-terminus); this interaction targets NS5A for ubiquitination and degradation. Interacts with host RAB18; this interaction may promote the association of NS5A and other replicase components with lipid droplets. Interacts (via region D2) with host PPIA/CYPA; the interaction stimulates RNA-binding ability of NS5A and is dependent on the peptidyl-prolyl cis-trans isomerase activity of PPIA/CYPA. Interacts with host TRIM14; this interaction induces the degradation of NS5A. Homooligomer. Interacts with non-structural protein 5A. Interacts with host VAPB. Interacts with host PRK2/PKN2. Interacts with host HNRNPA1 and SEPT6; these interactions facilitate viral replication. Part of the replication complex composed of NS2, NS3, NS4A, NS4B, NS5A and the RNA-directed RNA polymerase. It depends on Zn(2+) as a cofactor. The cofactor is Mg(2+). Specific enzymatic cleavages in vivo yield mature proteins. The structural proteins, core, E1, E2 and p7 are produced by proteolytic processing by host signal peptidases. The core protein precursor is synthesized as a 23 kDa, which is retained in the ER membrane through the hydrophobic signal peptide. Cleavage by the signal peptidase releases the 21 kDa mature core protein. The cleavage of the core protein precursor occurs between aminoacids 176 and 188 but the exact cleavage site is not known. Some degraded forms of the core protein appear as well during the course of infection. The other proteins (p7, NS2, NS3, NS4A, NS4B, NS5A and NS5B) are cleaved by the viral proteases. Autoprocessing between NS2 and NS3 is mediated by the NS2 cysteine protease catalytic domain and regulated by the NS3 N-terminal domain. In terms of processing, phosphorylated by host PKC and PKA. Post-translationally, ubiquitinated; mediated by UBE3A and leading to core protein subsequent proteasomal degradation. Highly N-glycosylated. In terms of processing, palmitoylation is required for NS2/3 autoprocessing and E2 recruitment to membranes. Post-translationally, palmitoylated. This modification may play a role in its polymerization or in protein-protein interactions. Phosphorylated on serines in a basal form termed p56. p58 is a hyperphosphorylated form of p56. p56 and p58 coexist in the cell in roughly equivalent amounts. Hyperphosphorylation is dependent on the presence of NS4A. Host CSNK1A1/CKI-alpha or RPS6KB1 kinases may be responsible for NS5A phosphorylation. In terms of processing, tyrosine phosphorylation is essential for the interaction with host SRC. Post-translationally, the N-terminus is phosphorylated by host PRK2/PKN2.

It is found in the host endoplasmic reticulum membrane. It localises to the host mitochondrion membrane. Its subcellular location is the virion. The protein resides in the host cytoplasm. The protein localises to the host nucleus. It is found in the host lipid droplet. It localises to the virion membrane. Its subcellular location is the host mitochondrion. The protein resides in the host cell membrane. The protein localises to the host perinuclear region. The enzyme catalyses Hydrolysis of four peptide bonds in the viral precursor polyprotein, commonly with Asp or Glu in the P6 position, Cys or Thr in P1 and Ser or Ala in P1'.. It catalyses the reaction a ribonucleoside 5'-triphosphate + H2O = a ribonucleoside 5'-diphosphate + phosphate + H(+). It carries out the reaction ATP + H2O = ADP + phosphate + H(+). The catalysed reaction is RNA(n) + a ribonucleoside 5'-triphosphate = RNA(n+1) + diphosphate. Its activity is regulated as follows. Inhibited by the antiviral drug hexamethylene amiloride. Inhibition by amantadine appears to be genotype-dependent. Also inhibited by long-alkyl-chain iminosugar derivatives. Activity is up-regulated by PRK2/PKN2-mediated phosphorylation. Functionally, packages viral RNA to form a viral nucleocapsid, and promotes virion budding. Participates in the viral particle production as a result of its interaction with the non-structural protein 5A. Binds RNA and may function as a RNA chaperone to induce the RNA structural rearrangements taking place during virus replication. Modulates viral translation initiation by interacting with viral IRES and 40S ribosomal subunit. Affects various cell signaling pathways, host immunity and lipid metabolism. Prevents the establishment of cellular antiviral state by blocking the interferon-alpha/beta (IFN-alpha/beta) and IFN-gamma signaling pathways and by blocking the formation of phosphorylated STAT1 and promoting ubiquitin-mediated proteasome-dependent degradation of STAT1. Activates STAT3 leading to cellular transformation. Regulates the activity of cellular genes, including c-myc and c-fos. May repress the promoter of p53, and sequester CREB3 and SP110 isoform 3/Sp110b in the cytoplasm. Represses cell cycle negative regulating factor CDKN1A, thereby interrupting an important check point of normal cell cycle regulation. Targets transcription factors involved in the regulation of inflammatory responses and in the immune response: suppresses TNF-induced NF-kappa-B activation, and activates AP-1. Binds to dendritic cells (DCs) via C1QR1, resulting in down-regulation of T-lymphocytes proliferation. Alters lipid metabolism by interacting with hepatocellular proteins involved in lipid accumulation and storage. Induces up-regulation of FAS promoter activity, and thereby contributes to the increased triglyceride accumulation in hepatocytes (steatosis). In terms of biological role, forms a heterodimer with envelope glycoprotein E2, which mediates virus attachment to the host cell, virion internalization through clathrin-dependent endocytosis and fusion with host membrane. Fusion with the host cell is most likely mediated by both E1 and E2, through conformational rearrangements of the heterodimer required for fusion rather than a classical class II fusion mechanism. E1/E2 heterodimer binds host apolipoproteins such as APOB and ApoE thereby forming a lipo-viro-particle (LVP). APOE associated to the LVP allows the initial virus attachment to cell surface receptors such as the heparan sulfate proteoglycans (HSPGs), syndecan-1 (SDC1), syndecan-1 (SDC2), the low-density lipoprotein receptor (LDLR) and scavenger receptor class B type I (SCARB1). The cholesterol transfer activity of SCARB1 allows E2 exposure and binding of E2 to SCARB1 and the tetraspanin CD81. E1/E2 heterodimer binding on CD81 activates the epithelial growth factor receptor (EGFR) signaling pathway. Diffusion of the complex E1-E2-EGFR-SCARB1-CD81 to the cell lateral membrane allows further interaction with Claudin 1 (CLDN1) and occludin (OCLN) to finally trigger HCV entry. Its function is as follows. Forms a heterodimer with envelope glycoprotein E1, which mediates virus attachment to the host cell, virion internalization through clathrin-dependent endocytosis and fusion with host membrane. Fusion with the host cell is most likely mediated by both E1 and E2, through conformational rearrangements of the heterodimer required for fusion rather than a classical class II fusion mechanism. The interaction between envelope glycoprotein E2 and host apolipoprotein E/APOE allows the proper assembly, maturation and infectivity of the viral particles. This interaction is probably promoted via the up-regulation of cellular autophagy by the virus. E1/E2 heterodimer binds host apolipoproteins such as APOB and APOE thereby forming a lipo-viro-particle (LVP). APOE associated to the LVP allows the initial virus attachment to cell surface receptors such as the heparan sulfate proteoglycans (HSPGs), syndecan-1 (SDC1), syndecan-1 (SDC2), the low-density lipoprotein receptor (LDLR) and scavenger receptor class B type I (SCARB1). The cholesterol transfer activity of SCARB1 allows E2 exposure and binding of E2 to SCARB1 and the tetraspanin CD81. E1/E2 heterodimer binding on CD81 activates the epithelial growth factor receptor (EGFR) signaling pathway. Diffusion of the complex E1-E2-EGFR-SCARB1-CD81 to the cell lateral membrane allows further interaction with Claudin 1 (CLDN1) and occludin (OCLN) to finally trigger HCV entry. Inhibits host EIF2AK2/PKR activation, preventing the establishment of an antiviral state. Viral ligand for CD209/DC-SIGN and CLEC4M/DC-SIGNR, which are respectively found on dendritic cells (DCs), and on liver sinusoidal endothelial cells and macrophage-like cells of lymph node sinuses. These interactions allow the capture of circulating HCV particles by these cells and subsequent facilitated transmission to permissive cells such as hepatocytes and lymphocyte subpopulations. The interaction between E2 and host amino acid transporter complex formed by SLC3A2 and SLC7A5/LAT1 may facilitate viral entry into host cell. Ion channel protein that acts as a viroporin and plays an essential role in the assembly, envelopment and secretion of viral particles. Regulates the host cell secretory pathway, which induces the intracellular retention of viral glycoproteins and favors assembly of viral particles. Creates a pore in acidic organelles and releases Ca(2+) and H(+) in the cytoplasm of infected cells, leading to a productive viral infection. High levels of cytoplasmic Ca(2+) may trigger membrane trafficking and transport of viral ER-associated proteins to viroplasms, sites of viral genome replication. This ionic imbalance induces the assembly of the inflammasome complex, which triggers the maturation of pro-IL-1beta into IL-1beta through the action of caspase-1. Targets also host mitochondria and induces mitochondrial depolarization. In addition of its role as a viroporin, acts as a lipid raft adhesion factor. Functionally, cysteine protease required for the proteolytic auto-cleavage between the non-structural proteins NS2 and NS3. The N-terminus of NS3 is required for the function of NS2 protease (active region NS2-3). Promotes the initiation of viral particle assembly by mediating the interaction between structural and non-structural proteins. In terms of biological role, displays three enzymatic activities: serine protease with a chymotrypsin-like fold, NTPase and RNA helicase. NS3 serine protease, in association with NS4A, is responsible for the cleavages of NS3-NS4A, NS4A-NS4B, NS4B-NS5A and NS5A-NS5B. The NS3/NS4A complex prevents phosphorylation of host IRF3, thus preventing the establishment of dsRNA induced antiviral state. The NS3/NS4A complex induces host amino acid transporter component SLC3A2, thus contributing to HCV propagation. NS3 RNA helicase binds to RNA and unwinds both dsDNA and dsRNA in the 3' to 5' direction, and likely resolves RNA complicated stable secondary structures in the template strand. Binds a single ATP and catalyzes the unzipping of a single base pair of dsRNA. Inhibits host antiviral proteins TBK1 and IRF3 thereby preventing the establishment of an antiviral state. Cleaves host MAVS/CARDIF thereby preventing the establishment of an antiviral state. Cleaves host TICAM1/TRIF, thereby disrupting TLR3 signaling and preventing the establishment of an antiviral state. Its function is as follows. Induces a specific membrane alteration that serves as a scaffold for the virus replication complex. This membrane alteration gives rise to the so-called ER-derived membranous web that contains the replication complex. NS4B self-interaction contributes to its function in membranous web formation. Promotes host TRIF protein degradation in a CASP8-dependent manner thereby inhibiting host TLR3-mediated interferon signaling. Disrupts the interaction between STING and TBK1 contributing to the inhibition of interferon signaling. Phosphorylated protein that is indispensable for viral replication and assembly. Both hypo- and hyperphosphorylated states are required for the viral life cycle. The hyperphosphorylated form of NS5A is an inhibitor of viral replication. Involved in RNA-binding and especially in binding to the viral genome. Zinc is essential for RNA-binding. Participates in the viral particle production as a result of its interaction with the mature viral core protein. Its interaction with host VAPB may target the viral replication complex to vesicles. Down-regulates viral IRES translation initiation. Mediates interferon resistance, presumably by interacting with and inhibiting host EIF2AK2/PKR. Prevents BIN1-induced apoptosis. Acts as a transcriptional activator of some host genes important for viral replication when localized in the nucleus. Via the interaction with host PACSIN2, modulates lipid droplet formation in order to promote virion assembly. Modulates TNFRSF21/DR6 signaling pathway for viral propagation. Functionally, RNA-dependent RNA polymerase that performs primer-template recognition and RNA synthesis during viral replication. Initiates RNA transcription/replication at a flavin adenine dinucleotide (FAD), resulting in a 5'- FAD cap on viral RNAs. In this way, recognition of viral 5' RNA by host pattern recognition receptors can be bypassed, thereby evading activation of antiviral pathways. The polypeptide is Genome polyprotein (Hepatitis C virus genotype 6a (isolate 6a33) (HCV)).